The primary structure comprises 327 residues: Porphobilinogen deaminase (327 aa).

C251 is modified (S-(dipyrrolylmethanemethyl)cysteine).

It belongs to the HMBS family. Dipyrromethane serves as cofactor.

The catalysed reaction is 4 porphobilinogen + H2O = hydroxymethylbilane + 4 NH4(+). The protein operates within porphyrin-containing compound metabolism; protoporphyrin-IX biosynthesis; coproporphyrinogen-III from 5-aminolevulinate: step 2/4. Tetrapolymerization of the monopyrrole PBG into the hydroxymethylbilane pre-uroporphyrinogen in several discrete steps. The protein is Porphobilinogen deaminase (HEM3) of Kluyveromyces lactis (strain ATCC 8585 / CBS 2359 / DSM 70799 / NBRC 1267 / NRRL Y-1140 / WM37) (Yeast).